Consider the following 289-residue polypeptide: NAD(P)H-hydrate epimerase (289 aa).

The 207-residue stretch at 71–277 (AQTIDNELMS…SIVEKYNLKI (207 aa)) folds into the YjeF N-terminal domain. 122 to 126 (NNGGD) is a binding site for (6S)-NADPHX. Residues Asn123 and Asp185 each coordinate K(+). (6S)-NADPHX-binding positions include 189 to 195 (GFSFRGE) and Asp218. Ser221 contacts K(+).

This sequence belongs to the NnrE/AIBP family. K(+) serves as cofactor.

It catalyses the reaction (6R)-NADHX = (6S)-NADHX. The enzyme catalyses (6R)-NADPHX = (6S)-NADPHX. Catalyzes the epimerization of the S- and R-forms of NAD(P)HX, a damaged form of NAD(P)H that is a result of enzymatic or heat-dependent hydration. This is a prerequisite for the S-specific NAD(P)H-hydrate dehydratase to allow the repair of both epimers of NAD(P)HX. In Plasmodium knowlesi (strain H), this protein is NAD(P)H-hydrate epimerase.